Consider the following 147-residue polypeptide: Protein phosphatase 1 regulatory subunit 14A (147 aa).

Residues 1-11 (MAAQRLGKRVL) are compositionally biased toward basic residues. The segment at 1 to 36 (MAAQRLGKRVLSKLQSPSRARGPGGSPSGLQKRHAR) is disordered. Ser26 is subject to Phosphoserine. The tract at residues 35–120 (ARVTVKYDRR…LLAKLRGLHK (86 aa)) is inhibitory. A Phosphothreonine; by PKC modification is found at Thr38. A disordered region spans residues 118–147 (LHKQPGFPQPSPSDDPSLSPRQDRAHTAPP). Phosphoserine occurs at positions 128, 134, and 136. The span at 138-147 (RQDRAHTAPP) shows a compositional bias: basic and acidic residues.

Belongs to the PP1 inhibitor family.

It localises to the cytoplasm. In terms of biological role, inhibitor of PPP1CA. Has over 1000-fold higher inhibitory activity when phosphorylated, creating a molecular switch for regulating the phosphorylation status of PPP1CA substrates and smooth muscle contraction. This Mus musculus (Mouse) protein is Protein phosphatase 1 regulatory subunit 14A (Ppp1r14a).